The chain runs to 179 residues: Large ribosomal subunit protein uL5 (179 aa).

Belongs to the universal ribosomal protein uL5 family. As to quaternary structure, part of the 50S ribosomal subunit; part of the 5S rRNA/L5/L18/L25 subcomplex. Contacts the 5S rRNA and the P site tRNA. Forms a bridge to the 30S subunit in the 70S ribosome.

Its function is as follows. This is one of the proteins that bind and probably mediate the attachment of the 5S RNA into the large ribosomal subunit, where it forms part of the central protuberance. In the 70S ribosome it contacts protein S13 of the 30S subunit (bridge B1b), connecting the 2 subunits; this bridge is implicated in subunit movement. Contacts the P site tRNA; the 5S rRNA and some of its associated proteins might help stabilize positioning of ribosome-bound tRNAs. The sequence is that of Large ribosomal subunit protein uL5 from Pectobacterium atrosepticum (strain SCRI 1043 / ATCC BAA-672) (Erwinia carotovora subsp. atroseptica).